The following is a 212-amino-acid chain: Peptide methionine sulfoxide reductase MsrA (212 aa).

Cys-52 is a catalytic residue.

Belongs to the MsrA Met sulfoxide reductase family.

It catalyses the reaction L-methionyl-[protein] + [thioredoxin]-disulfide + H2O = L-methionyl-(S)-S-oxide-[protein] + [thioredoxin]-dithiol. It carries out the reaction [thioredoxin]-disulfide + L-methionine + H2O = L-methionine (S)-S-oxide + [thioredoxin]-dithiol. In terms of biological role, has an important function as a repair enzyme for proteins that have been inactivated by oxidation. Catalyzes the reversible oxidation-reduction of methionine sulfoxide in proteins to methionine. The sequence is that of Peptide methionine sulfoxide reductase MsrA from Escherichia fergusonii (strain ATCC 35469 / DSM 13698 / CCUG 18766 / IAM 14443 / JCM 21226 / LMG 7866 / NBRC 102419 / NCTC 12128 / CDC 0568-73).